The sequence spans 249 residues: Voltage-gated potassium channel subunit beta-3 (249 aa).

Residues asparagine 44, serine 74, arginine 75, glutamine 100, tryptophan 129, serine 130, proline 131, leucine 132, alanine 133, cysteine 134, lysine 140, lysine 150, glycine 209, serine 211, glutamine 215, and glutamate 218 each contribute to the NADP(+) site.

This sequence belongs to the shaker potassium channel beta subunit family. As to quaternary structure, forms heteromultimeric complex with alpha subunits. Interacts with KCNA5 and KCNB2. Strong expression in brain, with highest levels in neocortical and allocortical regions, hippocampus, olfactory bulb and cerebellum. Also strong in kidney. Weak expression in lung, skeletal muscle and heart.

It is found in the cytoplasm. In terms of biological role, regulatory subunit of the voltage-gated potassium (Kv) channels composed of pore-forming and potassium-conducting alpha subunits and of regulatory beta subunit. The beta-3/KCNAB3 subunit may mediate closure of potassium channels. Enhances the expression of Kv2.2/KCNB2 alpha subunit-containing Kv channels but not Kv2.1/KCNB1. May display nicotinamide adenine dinucleotide phosphate (NADPH)-dependent aldoketoreductase activity. The binding of oxidized and reduced NADP(H) cofactors may be required for the regulation of potassium channel activity. This chain is Voltage-gated potassium channel subunit beta-3, found in Mus musculus (Mouse).